The primary structure comprises 888 residues: 3-hydroxy-3-methylglutaryl-coenzyme A reductase (888 aa).

The Cytoplasmic portion of the chain corresponds to methionine 1–histidine 9. The chain crosses the membrane as a helical span at residues glycine 10–glycine 39. Topologically, residues asparagine 40–aspartate 56 are lumenal. The chain crosses the membrane as a helical span at residues valine 57–phenylalanine 78. The 158-residue stretch at aspartate 61 to leucine 218 folds into the SSD domain. The INSIG-binding motif motif lies at tyrosine 75–phenylalanine 78. At glutamine 79–lysine 89 the chain is on the cytoplasmic side. Residue lysine 89 forms a Glycyl lysine isopeptide (Lys-Gly) (interchain with G-Cter in ubiquitin) linkage. A helical transmembrane segment spans residues tyrosine 90–leucine 114. Residues aspartate 115–glutamate 123 are Lumenal-facing. A helical transmembrane segment spans residues alanine 124–serine 149. At glutamine 150 to arginine 159 the chain is on the cytoplasmic side. A helical membrane pass occupies residues glycine 160 to valine 187. Topologically, residues arginine 188–glutamate 191 are lumenal. A helical transmembrane segment spans residues isoleucine 192–leucine 220. Topologically, residues glutamate 221–lysine 248 are cytoplasmic. Residue lysine 248 forms a Glycyl lysine isopeptide (Lys-Gly) (interchain with G-Cter in ubiquitin) linkage. A helical membrane pass occupies residues proline 249 to alanine 275. The Lumenal portion of the chain corresponds to aspartate 276–lysine 314. 2 N-linked (GlcNAc...) asparagine glycosylation sites follow: asparagine 281 and asparagine 296. The helical transmembrane segment at methionine 315–phenylalanine 339 threads the bilayer. At glutamate 340 to alanine 888 the chain is on the cytoplasmic side. Residues glutamate 559, lysine 691, and aspartate 767 each act as charge relay system in the active site. Histidine 866 (proton donor) is an active-site residue. Phosphoserine; by AMPK is present on serine 872.

Belongs to the HMG-CoA reductase family. As to quaternary structure, homotetramer. Homodimer. Interacts (via its SSD) with INSIG1; the interaction, accelerated by sterols, leads to the recruitment of HMGCR to AMFR/gp78 for its ubiquitination by the sterol-mediated ERAD pathway. Interacts with UBIAD1. Undergoes sterol-mediated ubiquitination and ER-associated degradation (ERAD). Accumulation of sterols in the endoplasmic reticulum (ER) membrane, triggers binding of the reductase to the ER membrane protein INSIG1 or INSIG2. The INSIG1 binding leads to the recruitment of the ubiquitin ligase, AMFR/gp78, RNF139 or RNF145, initiating ubiquitination of the reductase. The ubiquitinated reductase is then extracted from the ER membrane and delivered to cytosolic 26S proteosomes by a mechanism probably mediated by the ATPase Valosin-containing protein VCP/p97. The INSIG2-binding leads to the recruitment of the ubiquitin ligase RNF139, initiating ubiquitination of the reductase. Lys-248 is the main site of ubiquitination. Ubiquitination is enhanced by the presence of a geranylgeranylated protein. Post-translationally, N-glycosylated. Deglycosylated by NGLY1 on release from the endoplasmic reticulum (ER) in a sterol-mediated manner. In terms of processing, phosphorylated. Phosphorylation at Ser-872 reduces the catalytic activity.

It is found in the endoplasmic reticulum membrane. Its subcellular location is the peroxisome membrane. It carries out the reaction (R)-mevalonate + 2 NADP(+) + CoA = (3S)-3-hydroxy-3-methylglutaryl-CoA + 2 NADPH + 2 H(+). The protein operates within metabolic intermediate biosynthesis; (R)-mevalonate biosynthesis; (R)-mevalonate from acetyl-CoA: step 3/3. Regulated by a negative feedback mechanism through sterols and non-sterol metabolites derived from mevalonate. Phosphorylation at Ser-872 down-regulates the catalytic activity. Its function is as follows. Catalyzes the conversion of (3S)-hydroxy-3-methylglutaryl-CoA (HMG-CoA) to mevalonic acid, the rate-limiting step in the synthesis of cholesterol and other isoprenoids, thus plays a critical role in cellular cholesterol homeostasis. In Oryctolagus cuniculus (Rabbit), this protein is 3-hydroxy-3-methylglutaryl-coenzyme A reductase (HMGCR).